Consider the following 391-residue polypeptide: Phosphoglycerate kinase (391 aa).

Substrate-binding positions include 21–23 (DLN), R36, 59–62 (HLGR), R113, and R146. ATP-binding positions include K197, E319, and 345–348 (GGDT).

It belongs to the phosphoglycerate kinase family. In terms of assembly, monomer.

Its subcellular location is the cytoplasm. It catalyses the reaction (2R)-3-phosphoglycerate + ATP = (2R)-3-phospho-glyceroyl phosphate + ADP. It functions in the pathway carbohydrate degradation; glycolysis; pyruvate from D-glyceraldehyde 3-phosphate: step 2/5. In Shewanella putrefaciens (strain CN-32 / ATCC BAA-453), this protein is Phosphoglycerate kinase.